Reading from the N-terminus, the 222-residue chain is Homing endonuclease I-ApeI (222 aa).

As to quaternary structure, probably functions as a monomer. Requires Mg(2+) as cofactor. It depends on Mn(2+) as a cofactor.

Functionally, endonuclease involved in 16S rRNA intron I-alpha homing. Recognizes the minimal target 5'-GCAAGGCTGAAACTTAAAGG-3'; generates 4 base 3' protruding ends 5'-AAAC-3' and 5'-GTTT-3'. The polypeptide is Homing endonuclease I-ApeI (apeI) (Aeropyrum pernix (strain ATCC 700893 / DSM 11879 / JCM 9820 / NBRC 100138 / K1)).